A 149-amino-acid chain; its full sequence is Large ribosomal subunit protein bL9 (149 aa).

The protein belongs to the bacterial ribosomal protein bL9 family.

In terms of biological role, binds to the 23S rRNA. The sequence is that of Large ribosomal subunit protein bL9 from Helicobacter pylori (strain ATCC 700392 / 26695) (Campylobacter pylori).